The following is a 761-amino-acid chain: Phosphoribosylformylglycinamidine synthase subunit PurL (761 aa).

The active site involves histidine 49. ATP contacts are provided by tyrosine 52 and lysine 92. Glutamate 94 serves as a coordination point for Mg(2+). Residues serine 95–histidine 98 and arginine 117 each bind substrate. Residue histidine 96 is the Proton acceptor of the active site. Residue aspartate 118 coordinates Mg(2+). Glutamine 241 serves as a coordination point for substrate. Aspartate 269 is a Mg(2+) binding site. A substrate-binding site is contributed by glutamate 318–glutamine 320. Positions 502 and 539 each coordinate ATP. Asparagine 540 is a binding site for Mg(2+). Substrate is bound at residue serine 542.

This sequence belongs to the FGAMS family. Monomer. Part of the FGAM synthase complex composed of 1 PurL, 1 PurQ and 2 PurS subunits.

It is found in the cytoplasm. The enzyme catalyses N(2)-formyl-N(1)-(5-phospho-beta-D-ribosyl)glycinamide + L-glutamine + ATP + H2O = 2-formamido-N(1)-(5-O-phospho-beta-D-ribosyl)acetamidine + L-glutamate + ADP + phosphate + H(+). Its pathway is purine metabolism; IMP biosynthesis via de novo pathway; 5-amino-1-(5-phospho-D-ribosyl)imidazole from N(2)-formyl-N(1)-(5-phospho-D-ribosyl)glycinamide: step 1/2. In terms of biological role, part of the phosphoribosylformylglycinamidine synthase complex involved in the purines biosynthetic pathway. Catalyzes the ATP-dependent conversion of formylglycinamide ribonucleotide (FGAR) and glutamine to yield formylglycinamidine ribonucleotide (FGAM) and glutamate. The FGAM synthase complex is composed of three subunits. PurQ produces an ammonia molecule by converting glutamine to glutamate. PurL transfers the ammonia molecule to FGAR to form FGAM in an ATP-dependent manner. PurS interacts with PurQ and PurL and is thought to assist in the transfer of the ammonia molecule from PurQ to PurL. This is Phosphoribosylformylglycinamidine synthase subunit PurL from Chlorobium chlorochromatii (strain CaD3).